Consider the following 153-residue polypeptide: Putative pre-16S rRNA nuclease (153 aa).

The protein belongs to the YqgF nuclease family.

The protein localises to the cytoplasm. In terms of biological role, could be a nuclease involved in processing of the 5'-end of pre-16S rRNA. The chain is Putative pre-16S rRNA nuclease from Prochlorococcus marinus (strain AS9601).